Reading from the N-terminus, the 292-residue chain is Putative FNIP repeat-containing protein L281 (292 aa).

Residues 95 to 134 form an FNIP repeat; the sequence is FNKSIDDIPSTITHLSLGAAFNGEVSNIPTSVTHLKLGVS.

This is Putative FNIP repeat-containing protein L281 from Acanthamoeba polyphaga mimivirus (APMV).